A 715-amino-acid polypeptide reads, in one-letter code: Interferon-induced GTP-binding protein Mx2 (715 aa).

The Dynamin-type G domain maps to 115 to 387 (DLALPAIAVI…LIMHIQKSLP (273 aa)). The segment at 125-132 (GDQSSGKS) is G1 motif. 125 to 132 (GDQSSGKS) is a GTP binding site. A G2 motif region spans residues 150–152 (VTR). A G3 motif region spans residues 225-228 (DLPG). Residues 225-229 (DLPGI) and 294-297 (TKPD) contribute to the GTP site. Residues 294 to 297 (TKPD) are G4 motif. The segment at 326–329 (KCRG) is G5 motif. Positions 623–714 (FTEIGIHLNA…ALCQFSSKEI (92 aa)) constitute a GED domain.

It belongs to the TRAFAC class dynamin-like GTPase superfamily. Dynamin/Fzo/YdjA family.

Its subcellular location is the cytoplasm. It localises to the nucleus. The protein localises to the nuclear pore complex. In terms of biological role, interferon-induced dynamin-like GTPase with potent antiviral activity against human immunodeficiency virus type 1 (HIV-1). Acts by targeting the viral capsid and affects the nuclear uptake and/or stability of the HIV-1 replication complex and the subsequent chromosomal integration of the proviral DNA. Exhibits antiviral activity also against simian immunodeficiency virus (SIV-mnd). May play a role in regulating nucleocytoplasmic transport and cell-cycle progression. In Homo sapiens (Human), this protein is Interferon-induced GTP-binding protein Mx2 (MX2).